The chain runs to 526 residues: Light-independent protochlorophyllide reductase subunit B (526 aa).

Aspartate 36 provides a ligand contact to [4Fe-4S] cluster. Residue aspartate 290 is the Proton donor of the active site. 425–426 contributes to the substrate binding site; that stretch reads GL.

It belongs to the ChlB/BchB/BchZ family. Protochlorophyllide reductase is composed of three subunits; ChlL, ChlN and ChlB. Forms a heterotetramer of two ChlB and two ChlN subunits. It depends on [4Fe-4S] cluster as a cofactor.

The catalysed reaction is chlorophyllide a + oxidized 2[4Fe-4S]-[ferredoxin] + 2 ADP + 2 phosphate = protochlorophyllide a + reduced 2[4Fe-4S]-[ferredoxin] + 2 ATP + 2 H2O. It participates in porphyrin-containing compound metabolism; chlorophyll biosynthesis (light-independent). Functionally, component of the dark-operative protochlorophyllide reductase (DPOR) that uses Mg-ATP and reduced ferredoxin to reduce ring D of protochlorophyllide (Pchlide) to form chlorophyllide a (Chlide). This reaction is light-independent. The NB-protein (ChlN-ChlB) is the catalytic component of the complex. The protein is Light-independent protochlorophyllide reductase subunit B of Prochlorococcus marinus subsp. pastoris (strain CCMP1986 / NIES-2087 / MED4).